The following is a 78-amino-acid chain: RNA-binding protein Hfq (78 aa).

Positions D10–V69 constitute a Sm domain.

It belongs to the Hfq family. In terms of assembly, homohexamer.

RNA chaperone that binds small regulatory RNA (sRNAs) and mRNAs to facilitate mRNA translational regulation in response to envelope stress, environmental stress and changes in metabolite concentrations. Also binds with high specificity to tRNAs. The protein is RNA-binding protein Hfq of Bordetella avium (strain 197N).